Here is a 242-residue protein sequence, read N- to C-terminus: Octanoyltransferase (242 aa).

The BPL/LPL catalytic domain maps to 31-206 (SQTTDEIWFL…LFLKNFGYNQ (176 aa)). Substrate is bound by residues 70–77 (RGGQVTYH), 137–139 (SIG), and 150–152 (GLA). The active-site Acyl-thioester intermediate is the C168.

The protein belongs to the LipB family.

The protein resides in the cytoplasm. It carries out the reaction octanoyl-[ACP] + L-lysyl-[protein] = N(6)-octanoyl-L-lysyl-[protein] + holo-[ACP] + H(+). The protein operates within protein modification; protein lipoylation via endogenous pathway; protein N(6)-(lipoyl)lysine from octanoyl-[acyl-carrier-protein]: step 1/2. Its function is as follows. Catalyzes the transfer of endogenously produced octanoic acid from octanoyl-acyl-carrier-protein onto the lipoyl domains of lipoate-dependent enzymes. Lipoyl-ACP can also act as a substrate although octanoyl-ACP is likely to be the physiological substrate. This chain is Octanoyltransferase, found in Coxiella burnetii (strain Dugway 5J108-111).